Here is a 574-residue protein sequence, read N- to C-terminus: Acetolactate synthase large subunit (574 aa).

Glutamate 51 contributes to the thiamine diphosphate binding site. FAD-binding positions include arginine 153, 261 to 282 (HGTY…IGVR), and 304 to 323 (DIDP…IVGN). The interval 397 to 477 (QHQMFAALYY…ILILNLNNKS (81 aa)) is thiamine pyrophosphate binding. 2 residues coordinate Mg(2+): aspartate 448 and asparagine 475.

Belongs to the TPP enzyme family. As to quaternary structure, dimer of large and small chains. Mg(2+) serves as cofactor. Thiamine diphosphate is required as a cofactor.

The catalysed reaction is 2 pyruvate + H(+) = (2S)-2-acetolactate + CO2. The protein operates within amino-acid biosynthesis; L-isoleucine biosynthesis; L-isoleucine from 2-oxobutanoate: step 1/4. It participates in amino-acid biosynthesis; L-valine biosynthesis; L-valine from pyruvate: step 1/4. The chain is Acetolactate synthase large subunit (ilvI) from Buchnera aphidicola subsp. Schlechtendalia chinensis.